A 123-amino-acid chain; its full sequence is Holo-[acyl-carrier-protein] synthase (123 aa).

Asp-8 and Glu-56 together coordinate Mg(2+).

The protein belongs to the P-Pant transferase superfamily. AcpS family. It depends on Mg(2+) as a cofactor.

Its subcellular location is the cytoplasm. It catalyses the reaction apo-[ACP] + CoA = holo-[ACP] + adenosine 3',5'-bisphosphate + H(+). Functionally, transfers the 4'-phosphopantetheine moiety from coenzyme A to a Ser of acyl-carrier-protein. In Clostridium botulinum (strain Alaska E43 / Type E3), this protein is Holo-[acyl-carrier-protein] synthase.